Reading from the N-terminus, the 78-residue chain is DNA import protein CedA1 (78 aa).

A run of 2 helical transmembrane segments spans residues 12–32 (STVT…GWAL) and 53–73 (AIIA…ISYI).

Forms a complex composed of CedA, CedA1 and CedA2.

The protein localises to the cell membrane. Its function is as follows. Part of the Ced system, which is involved in DNA import. The protein is DNA import protein CedA1 of Sulfolobus acidocaldarius (strain ATCC 33909 / DSM 639 / JCM 8929 / NBRC 15157 / NCIMB 11770).